A 121-amino-acid polypeptide reads, in one-letter code: Large ribosomal subunit protein uL18 (121 aa).

This sequence belongs to the universal ribosomal protein uL18 family. Part of the 50S ribosomal subunit; part of the 5S rRNA/L5/L18/L25 subcomplex. Contacts the 5S and 23S rRNAs.

This is one of the proteins that bind and probably mediate the attachment of the 5S RNA into the large ribosomal subunit, where it forms part of the central protuberance. The protein is Large ribosomal subunit protein uL18 of Roseiflexus castenholzii (strain DSM 13941 / HLO8).